We begin with the raw amino-acid sequence, 803 residues long: Isoamylase 1, chloroplastic (803 aa).

The transit peptide at 1–54 (MASLPHCLSARPLVVAAAPGRPGPGPGPWLRGGARRRNAAFSAGNAGRRVGLRR) directs the protein to the chloroplast. Asp432 (nucleophile) is an active-site residue. The active-site Proton donor is the Glu488.

This sequence belongs to the glycosyl hydrolase 13 family. In terms of assembly, forms a homo-pentamer and a hetero-hexamer composed of five ISA1 and one ISA2. Interacts with FLO6/SIP4. As to expression, highly expressed in developing endosperm. Expressed at low levels in leaves.

It localises to the plastid. The protein resides in the chloroplast. The catalysed reaction is Hydrolysis of (1-&gt;6)-alpha-D-glucosidic branch linkages in glycogen, amylopectin and their beta-limit dextrins.. The protein operates within glycan biosynthesis; starch biosynthesis. With respect to regulation, inhibited by copper chloride, mercury chloride, ammonium molybdate and para-chloromercuribenzoate. Functionally, starch-debranching enzyme involved in amylopectin biosynthesis in endosperm. Functions by removing excess branches or improper branches that interfere with the formation of double helices of the cluster chains of amylopectin and crystallization of starch. Works as ISA1 homooligomer or together with ISA2 as heterooligomer. The heterooligomer ISA1 and ISA2 possesses higher affinity than the ISA1 homooligomer for various branched polyglucans in vitro, but no marked differences exist in chain preferences for debranching of amylopectin and phytoglycogen between these forms. The polypeptide is Isoamylase 1, chloroplastic (Oryza sativa subsp. japonica (Rice)).